A 675-amino-acid polypeptide reads, in one-letter code: L-type lectin-domain containing receptor kinase IV.1 (675 aa).

The signal sequence occupies residues 1–22 (MFLKLLTIFFFFFFNLIFQSSS). Residues 23–291 (QSLNFAYNNG…EPKRISEFYK (269 aa)) are Extracellular-facing. The interval 25 to 261 (LNFAYNNGFN…SEHYILGWSF (237 aa)) is legume-lectin like. N-linked (GlcNAc...) asparagine glycosylation is found at asparagine 57, asparagine 79, asparagine 112, asparagine 134, asparagine 153, and asparagine 186. A helical membrane pass occupies residues 292–312 (IGMPLISLFLIFSFIFLVCYI). Residues 313–675 (VRRRRKFAEE…IADSQLSGGR (363 aa)) are Cytoplasmic-facing. The region spanning 347 to 624 (FKEKGLLGTG…LHYLRGDAKL (278 aa)) is the Protein kinase domain. ATP is bound by residues 353–361 (LGTGGFGSV) and lysine 376. Catalysis depends on aspartate 472, which acts as the Proton acceptor.

In the C-terminal section; belongs to the protein kinase superfamily. Ser/Thr protein kinase family. This sequence in the N-terminal section; belongs to the leguminous lectin family.

It localises to the membrane. It carries out the reaction L-seryl-[protein] + ATP = O-phospho-L-seryl-[protein] + ADP + H(+). The catalysed reaction is L-threonyl-[protein] + ATP = O-phospho-L-threonyl-[protein] + ADP + H(+). The protein is L-type lectin-domain containing receptor kinase IV.1 (LECRK41) of Arabidopsis thaliana (Mouse-ear cress).